The primary structure comprises 469 residues: MATRVYMHTLGCPKNRVDSEVMLGTLAEAGYRLVQDPAQAEVIVVNTCGFIESAKEESVEAIVELADQKREGRCRKLVVTGCLVQRHAEELARELPEVDHFLGTGAYQDVARIVSDAQAKRLVVPDPDFVHSSATPRVNSLPSHTAYLKIAEGCDNACAFCIIPKLRGGQRSRPIDDLVAEAAALAAQGTVELSLVAQDLTAYGQDLPGKVRLHHLLPELAKVDGIRWIRLHYAYPRDVPDALVAAIADEPRIVKYLDMPLQHSSDRLLRAMKRGRDSVFLRDLLARLRSRIPGLALRTALIVGLPGETEADFEDLLRFVEEQRFERLGVFEYSAEEGTPAAEMADQVPDAVKRERRDRIMAVQQAISRAHQQAMIGRRVEVLVEGRAEETEHLLAGRHAQQAPEIDGLTYINDGVAYPGEIVTVEITDAAEYDLVGRVVARDPSRAARPLPAAPRAAPARKGGLNVLR.

In terms of domain architecture, MTTase N-terminal spans 3–119 (TRVYMHTLGC…VARIVSDAQA (117 aa)). C12, C48, C82, C154, C158, and C161 together coordinate [4Fe-4S] cluster. The region spanning 140–370 (SLPSHTAYLK…MAVQQAISRA (231 aa)) is the Radical SAM core domain. Residues 373–441 (QAMIGRRVEV…EYDLVGRVVA (69 aa)) enclose the TRAM domain. Residues 444–469 (PSRAARPLPAAPRAAPARKGGLNVLR) form a disordered region. Residues 447-461 (AARPLPAAPRAAPAR) are compositionally biased toward low complexity.

This sequence belongs to the methylthiotransferase family. RimO subfamily. [4Fe-4S] cluster is required as a cofactor.

It is found in the cytoplasm. It carries out the reaction L-aspartate(89)-[ribosomal protein uS12]-hydrogen + (sulfur carrier)-SH + AH2 + 2 S-adenosyl-L-methionine = 3-methylsulfanyl-L-aspartate(89)-[ribosomal protein uS12]-hydrogen + (sulfur carrier)-H + 5'-deoxyadenosine + L-methionine + A + S-adenosyl-L-homocysteine + 2 H(+). Its function is as follows. Catalyzes the methylthiolation of an aspartic acid residue of ribosomal protein uS12. This Anaeromyxobacter sp. (strain K) protein is Ribosomal protein uS12 methylthiotransferase RimO.